A 343-amino-acid polypeptide reads, in one-letter code: MSNTDKERAIAAALAQIEKSYGKGSVMKLGQRPHVDIEAVSTGSLGLDIALGIGGVPKGRIIEIFGPESSGKTTLTLHLIAEAQKKGGTCAFIDAEHALDPAYAKKLGVNIDELIISQPDTGEQALEIADTLIRSSGIDMIIIDSVAALVPKSEIEGEMGDAQMASQARLMSQALRKLTASINRTNCITVFINQIRMKIGVMFGSPETTTGGNALKFYASVRIDIRRIGSIKDKEEVIGSQTKVKVVKNKVSPPFKTADFDIMYGSGISKEGEIIDLGVKLDIVEKSGSWFSYKNVRIGQGRENVKQYLKEHPQISNEIEKIIREKSSKITNINLDQTEEEND.

Position 66–73 (66–73 (GPESSGKT)) interacts with ATP.

It belongs to the RecA family.

The protein localises to the cytoplasm. Can catalyze the hydrolysis of ATP in the presence of single-stranded DNA, the ATP-dependent uptake of single-stranded DNA by duplex DNA, and the ATP-dependent hybridization of homologous single-stranded DNAs. It interacts with LexA causing its activation and leading to its autocatalytic cleavage. The protein is Protein RecA of Rickettsia conorii (strain ATCC VR-613 / Malish 7).